A 283-amino-acid polypeptide reads, in one-letter code: 2-hydroxymuconate semialdehyde hydrolase (283 aa).

In terms of domain architecture, AB hydrolase-1 spans 32 to 262; the sequence is LMMIHGSGPG…QCGHWTQIEH (231 aa). Catalysis depends on residues Ser-107, Asp-228, and His-256.

It belongs to the DmpD/TodF/XylF esterase family.

The enzyme catalyses (2Z,4E)-2-hydroxy-6-oxohexa-2,4-dienoate + H2O = 2-oxopent-4-enoate + formate + H(+). It participates in aromatic compound metabolism; benzoate degradation via hydroxylation. Catalyzes the conversion of 2-hydroxymuconate semialdehyde to 2-hydroxypent-2,4-dienoate. The polypeptide is 2-hydroxymuconate semialdehyde hydrolase (dmpD) (Pseudomonas sp. (strain CF600)).